The chain runs to 717 residues: ATP-dependent zinc metalloprotease FtsH (717 aa).

Over 1-7 (MFKDKKM) the chain is Cytoplasmic. A helical transmembrane segment spans residues 8–28 (LKYIVIYSIIAFGILLTFNMV). Over 29–109 (KDEMLYEKVD…VEFNVTKPEN (81 aa)) the chain is Extracellular. Residues 110 to 130 (YQLLGLLMSWVFPLILIFFVG) form a helical membrane-spanning segment. Residues 131-717 (RMMFSKMNNK…SSTNNKVDGE (587 aa)) lie on the Cytoplasmic side of the membrane. 206–213 (GPPGTGKT) contacts ATP. His-427 serves as a coordination point for Zn(2+). Glu-428 is an active-site residue. His-431 and Asp-504 together coordinate Zn(2+). The segment at 670–717 (KLARANNEANNDALDSSKENEEVKSNVNDGATEEKKDDSSTNNKVDGE) is disordered. Basic and acidic residues-rich tracts occupy residues 684-693 (DSSKENEEVK) and 701-717 (TEEK…VDGE).

It in the central section; belongs to the AAA ATPase family. This sequence in the C-terminal section; belongs to the peptidase M41 family. As to quaternary structure, homohexamer. The cofactor is Zn(2+).

The protein resides in the cell membrane. Functionally, acts as a processive, ATP-dependent zinc metallopeptidase for both cytoplasmic and membrane proteins. Plays a role in the quality control of integral membrane proteins. The sequence is that of ATP-dependent zinc metalloprotease FtsH from Clostridium perfringens (strain ATCC 13124 / DSM 756 / JCM 1290 / NCIMB 6125 / NCTC 8237 / Type A).